The chain runs to 542 residues: Cytochrome P450 monooxygenase sdnH (542 aa).

A helical transmembrane segment spans residues 25–45 (LYVAGGILGAFTVYSIILVVY). A disordered region spans residues 141–160 (IIPPRGLGQEDSIGSTRSHD). The chain crosses the membrane as a helical span at residues 340–360 (FMGAGTYPTAATLIFVAYYIL). Residue cysteine 483 coordinates heme. Asparagine 506 carries N-linked (GlcNAc...) asparagine glycosylation.

This sequence belongs to the cytochrome P450 family. The cofactor is heme.

The protein resides in the membrane. Its pathway is antibiotic biosynthesis. Cytochrome P450 monooxygenase; part of the gene cluster that mediates the biosynthesis of sordarin and hypoxysordarin, glycoside antibiotics with a unique tetracyclic diterpene aglycone structure. First, the geranylgeranyl diphosphate synthase sdnC constructs GGDP from farnesyl diphosphate and isopentenyl diphosphate. The diterpene cyclase sdnA then catalyzes the cyclization of GGDP to afford cycloaraneosene. Cycloaraneosene is then hydroxylated four times by the putative cytochrome P450 monooxygenases sdnB, sdnE, sdnF and sdnH to give a hydroxylated cycloaraneosene derivative such as cycloaraneosene-8,9,13,19-tetraol. Although the order of the hydroxylations is unclear, at least C8, C9 and C13 of the cycloaraneosene skeleton are hydroxylated before the sordaricin formation. Dehydration of the 13-hydroxy group of the hydroxylated cycloaraneosene derivative might be catalyzed by an unassigned hypothetical protein such as sdnG and sdnP to construct the cyclopentadiene moiety. The FAD-dependent oxidoreductase sdnN is proposed to catalyze the oxidation at C9 of the hydroxylated cycloaraneosene derivative and also catalyze the Baeyer-Villiger oxidation to give the lactone intermediate. The presumed lactone intermediate would be hydrolyzed to give an acrolein moiety and a carboxylate moiety. Then, [4+2]cycloaddition would occur between the acrolein moiety and the cyclopentadiene moiety to give sordaricin. SdnN might also be involved in the [4+2]cycloaddition after the hypothesized oxidation to accommodate the oxidized product and prompt the [4+2]cycloaddition. GDP-6-deoxy-D-altrose may be biosynthesized from GDP-D-mannose by the putative GDP-mannose-4,6-dehydratase sdnI and the short-chain dehydrogenase sdnK. The glycosyltransferase sdnJ catalyzes the attachment of 6-deoxy-D-altrose onto the 19-hydroxy group of sordaricin to give 4'-O-demethylsordarin. The methyltransferase sdnD would complete the biosynthesis of sordarin. Sordarin can be further modified into hypoxysordarin. The unique acyl chain at the 3'-hydroxy group of hypoxysordarin would be constructed by an iterative type I PKS sdnO and the trans-acting polyketide methyltransferase sdnL. SdnL would be responsible for the introduction of an alpha-methyl group of the polyketide chain. Alternatively, the beta-lactamase-like protein sdnR might be responsible for the cleavage and transfer of the polyketide chain from the PKS sdnO to sordarin. Two putative cytochrome P450 monooxygenases, sdnQ and sdnT, might catalyze the epoxidations of the polyketide chain to complete the biosynthesis of hypoxysordarin. Transcriptional regulators sdnM and sdnS are presumably encoded for the transcriptional regulation of the expression of the sdn gene cluster. The protein is Cytochrome P450 monooxygenase sdnH of Sordaria araneosa (Pleurage araneosa).